The sequence spans 274 residues: Thiamine kinase (274 aa).

The protein belongs to the thiamine kinase family.

It catalyses the reaction thiamine + ATP = thiamine phosphate + ADP + H(+). It participates in cofactor biosynthesis; thiamine diphosphate biosynthesis; thiamine phosphate from thiamine: step 1/1. Catalyzes the ATP-dependent phosphorylation of thiamine to thiamine phosphate. Is involved in thiamine salvage. This chain is Thiamine kinase, found in Shigella flexneri serotype 5b (strain 8401).